Here is a 226-residue protein sequence, read N- to C-terminus: Chalcone--flavanone isomerase 1 (226 aa).

Substrate-binding residues include Thr52, Asn117, and Thr194.

The protein belongs to the chalcone isomerase family.

It carries out the reaction a chalcone = a flavanone.. It participates in secondary metabolite biosynthesis; flavonoid biosynthesis. Catalyzes the intramolecular cyclization of bicyclic chalcones into tricyclic (S)-flavanones. Responsible for the isomerization of 4,2',4',6'-tetrahydroxychalcone (also termed chalcone) into naringenin. The protein is Chalcone--flavanone isomerase 1 (CHI1) of Lotus japonicus (Lotus corniculatus var. japonicus).